The following is a 37-amino-acid chain: Mu-thomitoxin-Hme1a (37 aa).

Intrachain disulfides connect Cys-2–Cys-18, Cys-9–Cys-22, and Cys-17–Cys-33. Phenylalanine amide is present on Phe-37.

It belongs to the neurotoxin 01 (U2-agtx) family. In terms of processing, contains 3 disulfide bonds. Expressed by the venom gland.

Its subcellular location is the secreted. Blocks the Nav1.2/SCN2A, Nav1.4/SCN4A, and Nav1.6/SCN8A sodium channels. Reduces the peak amplitude of the sodium current and negatively shifts the steady-state inactivation process. Does not shift the threshold potential of activation or the voltage corresponding to maximal current. Does not change the reversal potential of the sodium current. May act on site 1 of the receptor. This chain is Mu-thomitoxin-Hme1a, found in Heriaeus mellotteei (Crab spider).